Consider the following 128-residue polypeptide: C-C motif chemokine 28 (128 aa).

The N-terminal stretch at 1-24 (MQQTGLTLALVALAVCVALPSSEA) is a signal peptide. 2 disulfides stabilise this stretch: Cys-32/Cys-60 and Cys-33/Cys-75. The disordered stretch occupies residues 89–128 (EQAAKKNTKGNICHKKQAGKRKSKGAHQEKPEIHSHKSPY). Residues 94–113 (KNTKGNICHKKQAGKRKSKG) are compositionally biased toward basic residues. Residues 114-128 (AHQEKPEIHSHKSPY) show a composition bias toward basic and acidic residues.

This sequence belongs to the intercrine beta (chemokine CC) family.

The protein localises to the secreted. Functionally, chemotactic activity for resting CD4, CD8 T-cells and eosinophils. Binds to CCR3 and CCR10 and induces calcium mobilization in a dose-dependent manner. The sequence is that of C-C motif chemokine 28 (CCL28) from Canis lupus familiaris (Dog).